Reading from the N-terminus, the 38-residue chain is Small ribosomal subunit protein eS32 (38 aa).

It belongs to the eukaryotic ribosomal protein eS32 family. Component of the small ribosomal subunit (SSU).

The sequence is that of Small ribosomal subunit protein eS32 (rpl41e) from Methanocaldococcus jannaschii (strain ATCC 43067 / DSM 2661 / JAL-1 / JCM 10045 / NBRC 100440) (Methanococcus jannaschii).